Here is a 392-residue protein sequence, read N- to C-terminus: MTLLGTALRPAATRVMLLGAGELGKEVAIECQRLGIEVIAVDRYPDAPAMHVAHRSHVINMLDGEALRHVITEEKPHYIVPEIEAIATDTLRELEDEGLNVVPCARATQLTMNREGIRRLAAEELGLPTSTYRFADSEASFHDAVAAVGFPCIVKPVMSSSGKGQSFIRSAEQLAQAWEYAQQGGRAGAGRVIVEGVVKFDFEITLLTVSAVDGVHFCAPVGHRQQDGDYRESWQPQQMSELALKRAQEIARHVVLALGGHGLFGVELFVCGDEVIFSEVSPRPHDTGMVTLISQDLSEFALHVRAFLGMPIGAIRQYGPAASAVILPQLTSQNVTFDDVHAAVGAGVQVRLFGKPEIDGTRRLGVALATGENVEEAVIRAKKAASRVTVKG.

Residues 22–23 (EL) and Glu-82 contribute to the N(1)-(5-phospho-beta-D-ribosyl)glycinamide site. ATP-binding positions include Arg-114, Lys-155, 160-165 (SSGKGQ), 195-198 (EGVV), and Glu-203. The ATP-grasp domain maps to 119–308 (RLAAEELGLP…EFALHVRAFL (190 aa)). The Mg(2+) site is built by Glu-267 and Glu-279. N(1)-(5-phospho-beta-D-ribosyl)glycinamide contacts are provided by residues Asp-286, Lys-355, and 362–363 (RR).

It belongs to the PurK/PurT family. As to quaternary structure, homodimer.

It catalyses the reaction N(1)-(5-phospho-beta-D-ribosyl)glycinamide + formate + ATP = N(2)-formyl-N(1)-(5-phospho-beta-D-ribosyl)glycinamide + ADP + phosphate + H(+). Its pathway is purine metabolism; IMP biosynthesis via de novo pathway; N(2)-formyl-N(1)-(5-phospho-D-ribosyl)glycinamide from N(1)-(5-phospho-D-ribosyl)glycinamide (formate route): step 1/1. Its function is as follows. Involved in the de novo purine biosynthesis. Catalyzes the transfer of formate to 5-phospho-ribosyl-glycinamide (GAR), producing 5-phospho-ribosyl-N-formylglycinamide (FGAR). Formate is provided by PurU via hydrolysis of 10-formyl-tetrahydrofolate. This is Formate-dependent phosphoribosylglycinamide formyltransferase from Salmonella choleraesuis (strain SC-B67).